We begin with the raw amino-acid sequence, 129 residues long: Fluoride-specific ion channel FluC 2 (129 aa).

4 consecutive transmembrane segments (helical) span residues 3–23 (FLYV…MNLW), 32–52 (ATLA…RFLA), 59–79 (LVLL…FSAF), and 90–110 (GAWL…LIMV). The Na(+) site is built by Gly71 and Thr74.

Belongs to the fluoride channel Fluc/FEX (TC 1.A.43) family.

The protein localises to the cell membrane. The enzyme catalyses fluoride(in) = fluoride(out). Its activity is regulated as follows. Na(+) is not transported, but it plays an essential structural role and its presence is essential for fluoride channel function. In terms of biological role, fluoride-specific ion channel. Important for reducing fluoride concentration in the cell, thus reducing its toxicity. The protein is Fluoride-specific ion channel FluC 2 of Listeria monocytogenes serovar 1/2a (strain ATCC BAA-679 / EGD-e).